A 256-amino-acid chain; its full sequence is Spheroidene monooxygenase (256 aa).

The segment covering 1 to 23 (MTNELSNAAGASQQGPAASSFSA) has biased composition (low complexity). The interval 1–26 (MTNELSNAAGASQQGPAASSFSADTP) is disordered.

It belongs to the CrtA family. The cofactor is heme.

It carries out the reaction spheroidene + 4 reduced [2Fe-2S]-[ferredoxin] + 2 O2 + 4 H(+) = spheroiden-2-one + 4 oxidized [2Fe-2S]-[ferredoxin] + 3 H2O. The catalysed reaction is spirilloxanthin + 4 reduced [2Fe-2S]-[ferredoxin] + 2 O2 + 4 H(+) = 2-oxospirilloxanthin + 4 oxidized [2Fe-2S]-[ferredoxin] + 3 H2O. It catalyses the reaction 2-oxospirilloxanthin + 4 reduced [2Fe-2S]-[ferredoxin] + 2 O2 + 4 H(+) = 2,2'-dioxospirilloxanthin + 4 oxidized [2Fe-2S]-[ferredoxin] + 3 H2O. The enzyme catalyses spheroidene + 2 reduced [2Fe-2S]-[ferredoxin] + O2 + 2 H(+) = 2-hydroxyspheroidene + 2 oxidized [2Fe-2S]-[ferredoxin] + H2O. It carries out the reaction 2-hydroxyspheroidene + 2 reduced [2Fe-2S]-[ferredoxin] + O2 + 2 H(+) = 2,2-dihydroxyspheroidene + 2 oxidized [2Fe-2S]-[ferredoxin] + H2O. The catalysed reaction is 2,2-dihydroxyspheroidene = spheroiden-2-one + H2O. It catalyses the reaction spirilloxanthin + 2 reduced [2Fe-2S]-[ferredoxin] + O2 + 2 H(+) = 2-hydroxyspirilloxanthin + 2 oxidized [2Fe-2S]-[ferredoxin] + H2O. The enzyme catalyses 2-hydroxyspirilloxanthin + 2 reduced [2Fe-2S]-[ferredoxin] + O2 + 2 H(+) = 2,2-dihydroxyspirilloxanthin + 2 oxidized [2Fe-2S]-[ferredoxin] + H2O. It carries out the reaction 2,2-dihydroxyspirilloxanthin = 2-oxospirilloxanthin + H2O. The catalysed reaction is 2-oxospirilloxanthin + 2 reduced [2Fe-2S]-[ferredoxin] + O2 + 2 H(+) = 2'-hydroxy-2-oxospirilloxanthin + 2 oxidized [2Fe-2S]-[ferredoxin] + H2O. It catalyses the reaction 2'-hydroxy-2-oxospirilloxanthin + 2 reduced [2Fe-2S]-[ferredoxin] + O2 + 2 H(+) = 2',2'-dihydroxy-2-oxospirilloxanthin + 2 oxidized [2Fe-2S]-[ferredoxin] + H2O. The enzyme catalyses 2',2'-dihydroxy-2-oxospirilloxanthin = 2,2'-dioxospirilloxanthin + H2O. Its pathway is carotenoid biosynthesis; spheroidene biosynthesis. It participates in carotenoid biosynthesis; spirilloxanthin biosynthesis. Involved in the biosynthesis of the carotenoids spheroidene and spirilloxanthin. Catalyzes the introduction of one keto group at the C-2 position of spheroidene and two keto groups at the C-2 and C-2' positions of spirilloxanthin. The sequence is that of Spheroidene monooxygenase from Rubrivivax gelatinosus (Rhodocyclus gelatinosus).